We begin with the raw amino-acid sequence, 665 residues long: Protein LOW PHOTOSYNTHETIC EFFICIENCY 1, chloroplastic (665 aa).

The N-terminal 68 residues, 1–68 (MQALSILPLK…VSSNRKVLFL (68 aa)), are a transit peptide targeting the chloroplast. 13 PPR repeats span residues 145 to 179 (PLQV…KSES), 181 to 217 (GVIG…GIVP), 218 to 252 (NIVT…GFEP), 253 to 283 (NPIT…LREK), 309 to 344 (GRIC…GVRP), 345 to 375 (SREE…IRER), 380 to 414 (SLSV…GPEP), 422 to 456 (VVSH…GLKP), 457 to 491 (QRRH…GEKP), 492 to 526 (TVIS…GIEP), 527 to 561 (NLYA…GIEP), 562 to 596 (SVVT…NVEP), and 597 to 631 (NEIT…GLKL).

Belongs to the PPR family. P subfamily. In terms of assembly, interacts with HCF173.

It localises to the plastid. The protein localises to the chloroplast thylakoid membrane. The protein resides in the chloroplast stroma. Functionally, required for light-regulated photosystem II (PSII) biogenesis and grana thylakoids formation by binding to the 5' UTR of PSII subunit mRNAs (e.g. psbJ, psbN and psbA) in a light-dependent manner through a redox-based mechanism, and facilitating the association of HCF173 with target mRNAs, which encodes PSII reaction center proteins (e.g. J, N and D1), thus regulating its expression by modulating ribosome loading. The sequence is that of Protein LOW PHOTOSYNTHETIC EFFICIENCY 1, chloroplastic from Arabidopsis thaliana (Mouse-ear cress).